We begin with the raw amino-acid sequence, 172 residues long: uncharacterized protein (172 aa).

The tract at residues 130-154 (EQEKGAAPQEGKDWQVISEEDKKNQ) is disordered.

This is an uncharacterized protein from Bacillus subtilis (strain 168).